A 319-amino-acid chain; its full sequence is Adenosine receptor A3 (319 aa).

The Extracellular segment spans residues Met-1–Thr-15. Residues Asn-5 and Asn-13 are each glycosylated (N-linked (GlcNAc...) asparagine). A helical transmembrane segment spans residues Tyr-16–Val-38. At Lys-39–Val-49 the chain is on the cytoplasmic side. Residues Tyr-50–Val-73 traverse the membrane as a helical segment. The Extracellular portion of the chain corresponds to Ser-74–Leu-85. Cys-84 and Cys-167 are disulfide-bonded. Residues Phe-86–Val-107 traverse the membrane as a helical segment. The Cytoplasmic segment spans residues His-108–Arg-127. Residues Ile-128–Gly-149 traverse the membrane as a helical segment. The Extracellular portion of the chain corresponds to Trp-150–Met-178. Asn-161 carries N-linked (GlcNAc...) asparagine glycosylation. A helical transmembrane segment spans residues Val-179–Leu-199. The Cytoplasmic portion of the chain corresponds to Asp-200–Ser-232. Residues Leu-233–Phe-256 form a helical membrane-spanning segment. The Extracellular segment spans residues Asp-257 to Asp-262. A helical transmembrane segment spans residues Val-263–Cys-285. At Lys-286–Glu-319 the chain is on the cytoplasmic side. Cys-304 is lipidated: S-palmitoyl cysteine.

Belongs to the G-protein coupled receptor 1 family. Post-translationally, phosphorylation on Thr-317 and Thr-318 may be crucial for rapid desensitization. Phosphorylation on Thr-317 may be necessary for phosphorylation on Thr-318 to occur.

It localises to the cell membrane. Receptor for adenosine. The activity of this receptor is mediated by G proteins which inhibits adenylyl cyclase. This chain is Adenosine receptor A3 (Adora3), found in Mus musculus (Mouse).